Reading from the N-terminus, the 446-residue chain is ATP-dependent protease ATPase subunit HslU (446 aa).

Residues I17, G59 to E64, D255, E320, and R392 each bind ATP.

Belongs to the ClpX chaperone family. HslU subfamily. As to quaternary structure, a double ring-shaped homohexamer of HslV is capped on each side by a ring-shaped HslU homohexamer. The assembly of the HslU/HslV complex is dependent on binding of ATP.

The protein localises to the cytoplasm. Its function is as follows. ATPase subunit of a proteasome-like degradation complex; this subunit has chaperone activity. The binding of ATP and its subsequent hydrolysis by HslU are essential for unfolding of protein substrates subsequently hydrolyzed by HslV. HslU recognizes the N-terminal part of its protein substrates and unfolds these before they are guided to HslV for hydrolysis. This Pseudomonas fluorescens (strain ATCC BAA-477 / NRRL B-23932 / Pf-5) protein is ATP-dependent protease ATPase subunit HslU.